Here is a 311-residue protein sequence, read N- to C-terminus: MLNTTFANAKFANPFMNASGVHCMTIEDLEELKASQAGAYITKSSTLEKREGNPLPRYVDLELGSINSMGLPNLGFDYYLDYVLKNQKENAQEGPIFFSIAGMSAAENIAMLKKIQESDFSGITELNLSCPNVPGKPQLAYDFEATEKLLKEVFTFFTKPLGVKLPPYFDLVHFDIMAEILNQFPLTYVNSVNSIGNGLFIDPEAESVVIKPKDGFGGIGGAYIKPTALANVRAFYTRLKPEIQIIGTGGIETGQDAFEHLLCGATMLQIGTALHKEGPAIFDRIIKELEEIMNQKGYQSIADFHGKLKSL.

Residues S19 and 43 to 44 each bind FMN; that span reads KS. Substrate is bound by residues K43, 67 to 71, and N127; that span reads NSMGL. N127 lines the FMN pocket. Residue C130 is the Nucleophile of the active site. K164 and V192 together coordinate FMN. Substrate is bound at residue 193–194; it reads NS. FMN is bound by residues G221, 249–250, and 271–272; these read GG and GT.

The protein belongs to the dihydroorotate dehydrogenase family. Type 1 subfamily. Homodimer. FMN serves as cofactor.

It is found in the cytoplasm. It carries out the reaction (S)-dihydroorotate + fumarate = orotate + succinate. It participates in pyrimidine metabolism; UMP biosynthesis via de novo pathway. Functionally, catalyzes the conversion of dihydroorotate to orotate with fumarate as the electron acceptor. This Lactococcus lactis subsp. cremoris (Streptococcus cremoris) protein is Dihydroorotate dehydrogenase A (fumarate) (pyrDA).